The primary structure comprises 383 residues: Adaptive-response sensory kinase SasA (383 aa).

In terms of domain architecture, Histidine kinase spans 152–365; that stretch reads MVAHELRTPL…CFTFNVPIWQ (214 aa). His155 is subject to Phosphohistidine; by autocatalysis.

Homooligomerizes. Interacts with KaiC. Participates in the KaiABC clock complex, whose core is composed of a KaiC homohexamer, 6 KaiB and up to 6 KaiA dimers. SasA and KaiB(fs) compete to bind to KaiC.

The enzyme catalyses ATP + protein L-histidine = ADP + protein N-phospho-L-histidine.. In terms of biological role, member of the two-component regulatory system SasA/RpaA involved in genome-wide circadian gene expression. One of several clock output pathways. Participates in the Kai clock protein complex, the main circadian regulator in cyanobacteria, via its interaction with KaiC. KaiC enhances the autophosphorylation activity of SasA, which then transfers its phosphate group to RpaA to activate it. In addition to its output function, recruits fold-shifted KaiB (KaiB(fs)) to KaiC to cooperatively form the KaiB(6):KaiC(6) complex (independent of SasA kinase activity). Required for robustness of the circadian rhythm of gene expression and is involved in clock output, also required for adaptation to light/dark cycles. This chain is Adaptive-response sensory kinase SasA, found in Synechococcus sp. (strain CC9311).